The sequence spans 307 residues: Ribosomal RNA small subunit methyltransferase H (307 aa).

Residues 33-35 (GGH), Asp-52, Leu-83, Asp-97, and Gln-104 contribute to the S-adenosyl-L-methionine site.

The protein belongs to the methyltransferase superfamily. RsmH family.

It localises to the cytoplasm. The catalysed reaction is cytidine(1402) in 16S rRNA + S-adenosyl-L-methionine = N(4)-methylcytidine(1402) in 16S rRNA + S-adenosyl-L-homocysteine + H(+). Functionally, specifically methylates the N4 position of cytidine in position 1402 (C1402) of 16S rRNA. The sequence is that of Ribosomal RNA small subunit methyltransferase H from Campylobacter fetus subsp. fetus (strain 82-40).